Reading from the N-terminus, the 447-residue chain is Enolase (447 aa).

Glutamine 168 is a binding site for (2R)-2-phosphoglycerate. Glutamate 210 functions as the Proton donor in the catalytic mechanism. Mg(2+)-binding residues include aspartate 247, glutamate 292, and aspartate 319. Positions 344, 373, 374, and 395 each coordinate (2R)-2-phosphoglycerate. Lysine 344 acts as the Proton acceptor in catalysis.

Belongs to the enolase family. In terms of assembly, component of the RNA degradosome, a multiprotein complex involved in RNA processing and mRNA degradation. Mg(2+) is required as a cofactor.

Its subcellular location is the cytoplasm. The protein resides in the secreted. The protein localises to the cell surface. The enzyme catalyses (2R)-2-phosphoglycerate = phosphoenolpyruvate + H2O. Its pathway is carbohydrate degradation; glycolysis; pyruvate from D-glyceraldehyde 3-phosphate: step 4/5. Functionally, catalyzes the reversible conversion of 2-phosphoglycerate (2-PG) into phosphoenolpyruvate (PEP). It is essential for the degradation of carbohydrates via glycolysis. The polypeptide is Enolase (Blochmanniella floridana).